A 306-amino-acid chain; its full sequence is Ribonuclease Z (306 aa).

Residues histidine 63, histidine 65, aspartate 67, histidine 68, histidine 141, aspartate 211, and histidine 269 each contribute to the Zn(2+) site. Aspartate 67 serves as the catalytic Proton acceptor.

Belongs to the RNase Z family. In terms of assembly, homodimer. The cofactor is Zn(2+).

The catalysed reaction is Endonucleolytic cleavage of RNA, removing extra 3' nucleotides from tRNA precursor, generating 3' termini of tRNAs. A 3'-hydroxy group is left at the tRNA terminus and a 5'-phosphoryl group is left at the trailer molecule.. Zinc phosphodiesterase, which displays some tRNA 3'-processing endonuclease activity. Probably involved in tRNA maturation, by removing a 3'-trailer from precursor tRNA. In Macrococcus caseolyticus (strain JCSC5402) (Macrococcoides caseolyticum), this protein is Ribonuclease Z.